A 2488-amino-acid polypeptide reads, in one-letter code: PKS-NRPS hybrid synthetase swnK (2488 aa).

The adenylation (A) domain stretch occupies residues 33 to 422; that stretch reads FEQVADRFPD…GRIDGVVKIR (390 aa). The Carrier 1 domain occupies 523-598; the sequence is QPTSELEQRI…ALAAYLAGTG (76 aa). The residue at position 558 (serine 558) is an O-(pantetheine 4'-phosphoryl)serine. The Ketosynthase family 3 (KS3) domain occupies 616 to 1039; it reads HEDIAIVSMA…GTNAHVIVEE (424 aa). Residues cysteine 785, histidine 920, and histidine 960 each act as for beta-ketoacyl synthase activity in the active site. The interval 1149 to 1471 is malonyl-CoA:ACP transacylase (MAT) domain; the sequence is LFTGQGSQLP…SLSELHVRHV (323 aa). Residues 1723–1901 are ketoreductase (KR) domain; that stretch reads GAVLVTGGLG…ASSVAYGTWA (179 aa). The 76-residue stretch at 2002-2077 folds into the Carrier 2 domain; the sequence is SIVLHMVQAT…SLSEFLLCRL (76 aa). Serine 2037 is modified (O-(pantetheine 4'-phosphoryl)serine). Residues 2084–2103 form a disordered region; sequence STSSPSDTDGATPSTPTSAA. The interval 2136-2364 is thioester reductase (TE) domain; it reads VTGATGFVGT…VLPVDYLCGT (229 aa).

In the N-terminal section; belongs to the NRP synthetase family.

The catalysed reaction is L-pipecolate + malonyl-CoA + 2 NADPH + 4 H(+) = (8aS)-octahydroindolizin-1-one + CO2 + 2 NADP(+) + CoA + 2 H2O. The enzyme catalyses L-pipecolate + malonyl-CoA + 3 NADPH + 5 H(+) = (1R,8aS)-octahydroindolizin-1-ol + CO2 + 3 NADP(+) + CoA + 2 H2O. It carries out the reaction L-pipecolate + malonyl-CoA + 3 NADPH + 5 H(+) = (1S,8aS)-octahydroindolizin-1-ol + CO2 + 3 NADP(+) + CoA + 2 H2O. It participates in mycotoxin biosynthesis. PKS-NRPS hybrid synthetase; part of the gene cluster that mediates the biosynthesis of swainsonine (SW), a cytotoxic fungal alkaloid and a potential cancer therapy drug. Swainsonine production occurs via a multibranched pathway and is dispensable for fungal colonization of plants and infection of insect hosts. The first step of swainsonine biosynthesis is the production of the precursor pipecolic acid (PA) via conversion of L-lysine (Lys) to 1-piperideine-6-carboxylate (P6C) by the aminotransferase swnA, the latter being further reduced to PA by the reductase swnR. PA can be converted from lysine by both the SW biosynthetic cluster and the unclustered genes such as lysine cyclodeaminase. The PKS-NRPS hybrid synthetase swnK uptakes and condensates PA and malonyl-CoA with and without skipping of the ketoreductase (KR) domain in order to produce 3 intermediates, 1-oxoindolizidine, (1S)-1-hydroxyindolizin, and (1R)-1-hydroxyindolizine; with the transisomer (1S)-1-hydroxyindolizin being predominant. The terminal thioester reductase (TE) domain of swnK is involved in reduction of the thioester bond to release the intermediate aldehydes. The oxidoreductase swnN could contribute to the reduction of 1-oxoindolizidine to (1S)-1-hydroxyindolizin and (1R)-1-hydroxyindolizine, contributing to the major route of SW production. The dioxygenase swnH2 would be responsible for the oxidization of (1R)-1-hydroxyindolizine into (1R,2S)-1,2-dihydroxyindolizine and of (1S)-1-hydroxyindolizin to yield both (1R,2S)-1,2-dihydroxyindolizine and (1S,2S)-1,2-dihydroxyindolizine. The dioxygenase swnH1 then performs the conversion of the 1,2-dihydroxyindolizine epimers to SW. The protein is PKS-NRPS hybrid synthetase swnK of Metarhizium robertsii (strain ARSEF 23 / ATCC MYA-3075) (Metarhizium anisopliae (strain ARSEF 23)).